Reading from the N-terminus, the 509-residue chain is Glutamate--tRNA ligase (509 aa).

A 'HIGH' region motif is present at residues 20 to 30 (PSPTGFPHVGT). Cysteine 117, cysteine 119, cysteine 144, and histidine 146 together coordinate Zn(2+). The 'KMSKS' region motif lies at 261 to 265 (KLSKR). Lysine 264 serves as a coordination point for ATP.

It belongs to the class-I aminoacyl-tRNA synthetase family. Glutamate--tRNA ligase type 1 subfamily. Monomer. It depends on Zn(2+) as a cofactor.

It is found in the cytoplasm. It carries out the reaction tRNA(Glu) + L-glutamate + ATP = L-glutamyl-tRNA(Glu) + AMP + diphosphate. Its function is as follows. Catalyzes the attachment of glutamate to tRNA(Glu) in a two-step reaction: glutamate is first activated by ATP to form Glu-AMP and then transferred to the acceptor end of tRNA(Glu). In Psychrobacter cryohalolentis (strain ATCC BAA-1226 / DSM 17306 / VKM B-2378 / K5), this protein is Glutamate--tRNA ligase.